A 378-amino-acid chain; its full sequence is Calponin homolog OV9M (378 aa).

Positions 1 to 20 (MPAQPAQENAQDADDAQANA) are enriched in low complexity. Positions 1 to 35 (MPAQPAQENAQDADDAQANATMETRVAGQGQPKRV) are disordered. Calponin-like repeat units lie at residues 50-75 (IPSQAGWNKGDSQKLMTNFGTPRNTQ), 98-123 (VRLQSGTNKFESQRGMTGFGTGRDVC), 151-176 (VRLQAGTNKYDSQKGMTGFGTARRET), 197-222 (IPLQAGTNKFASQKGMIGFGTSRRET), 244-269 (IPSQMGSNKYASQKGMTGFGQPRWEV), 285-310 (VRLQSGTNRFASQQGMTGFGTPRNTT), and 330-355 (IPSQAGWNRGDSQKGMTGFGAPRDVK). The disordered stretch occupies residues 175-194 (ETTKMTDSKHPDYDHERPDQ). The segment at 230–256 (HPEYDPESSIDSSTIPSQMGSNKYASQ) is disordered. Over residues 238–256 (SIDSSTIPSQMGSNKYASQ) the composition is skewed to polar residues. The disordered stretch occupies residues 331-352 (PSQAGWNRGDSQKGMTGFGAPR).

This sequence belongs to the calponin family. In terms of tissue distribution, found in the longitudinal muscles below the hypodermis.

Functionally, could be involved in muscle contraction. The polypeptide is Calponin homolog OV9M (Onchocerca volvulus).